Consider the following 206-residue polypeptide: Large ribosomal subunit protein mL62 (206 aa).

Residues 1-29 (MAAARCLRWGLSRAEAWLLPPPTSCCHRA) constitute a mitochondrion transit peptide. N5-methylglutamine is present on Gln90.

Belongs to the prokaryotic/mitochondrial release factor family. Mitochondrion-specific ribosomal protein mL62 subfamily. Component of the mitochondrial ribosome large subunit (39S) which comprises a 16S rRNA and about 50 distinct proteins. Methylation of glutamine in the GGQ triplet by HEMK1.

It is found in the mitochondrion. The catalysed reaction is an N-acyl-L-alpha-aminoacyl-tRNA + H2O = an N-acyl-L-amino acid + a tRNA + H(+). Essential peptidyl-tRNA hydrolase component of the mitochondrial large ribosomal subunit. Acts as a codon-independent translation release factor that has lost all stop codon specificity and directs the termination of translation in mitochondrion, possibly in case of abortive elongation. May be involved in the hydrolysis of peptidyl-tRNAs that have been prematurely terminated and thus in the recycling of stalled mitochondrial ribosomes. This is Large ribosomal subunit protein mL62 from Bos taurus (Bovine).